We begin with the raw amino-acid sequence, 198 residues long: Glycerol-3-phosphate acyltransferase (198 aa).

6 consecutive transmembrane segments (helical) span residues 1–21 (MNLL…GYLA), 55–75 (VFLL…YLLL), 79–99 (WQVA…WLNW), 111–131 (IFLG…IIMI), 136–156 (IVSL…FLSF), and 158–178 (GSNL…LVIW).

Belongs to the PlsY family. Probably interacts with PlsX.

Its subcellular location is the cell inner membrane. The enzyme catalyses an acyl phosphate + sn-glycerol 3-phosphate = a 1-acyl-sn-glycero-3-phosphate + phosphate. The protein operates within lipid metabolism; phospholipid metabolism. In terms of biological role, catalyzes the transfer of an acyl group from acyl-phosphate (acyl-PO(4)) to glycerol-3-phosphate (G3P) to form lysophosphatidic acid (LPA). This enzyme utilizes acyl-phosphate as fatty acyl donor, but not acyl-CoA or acyl-ACP. The polypeptide is Glycerol-3-phosphate acyltransferase (Prochlorococcus marinus (strain NATL2A)).